The primary structure comprises 549 residues: Glucose-6-phosphate isomerase (549 aa).

3 positions are modified to N6-acetyllysine: lysine 80, lysine 228, and lysine 234. Glutamate 355 acts as the Proton donor in catalysis. Catalysis depends on residues histidine 386 and lysine 514.

Belongs to the GPI family.

It localises to the cytoplasm. It catalyses the reaction alpha-D-glucose 6-phosphate = beta-D-fructose 6-phosphate. Its pathway is carbohydrate biosynthesis; gluconeogenesis. It participates in carbohydrate degradation; glycolysis; D-glyceraldehyde 3-phosphate and glycerone phosphate from D-glucose: step 2/4. Functionally, catalyzes the reversible isomerization of glucose-6-phosphate to fructose-6-phosphate. The protein is Glucose-6-phosphate isomerase of Escherichia fergusonii (strain ATCC 35469 / DSM 13698 / CCUG 18766 / IAM 14443 / JCM 21226 / LMG 7866 / NBRC 102419 / NCTC 12128 / CDC 0568-73).